A 256-amino-acid chain; its full sequence is Nickel import ATP-binding protein NikD (256 aa).

The region spanning 6 to 245 is the ABC transporter domain; the sequence is LEIRGLRIET…PASATARTLL (240 aa). Position 38-45 (38-45) interacts with ATP; that stretch reads GASGSGKS.

This sequence belongs to the ABC transporter superfamily. Nickel importer (TC 3.A.1.5.3) family. The complex is composed of two ATP-binding proteins (NikD and NikE), two transmembrane proteins (NikB and NikC) and a solute-binding protein (NikA).

Its subcellular location is the cell inner membrane. It catalyses the reaction Ni(2+)(out) + ATP + H2O = Ni(2+)(in) + ADP + phosphate + H(+). Functionally, part of the ABC transporter complex NikABCDE involved in nickel import. Responsible for energy coupling to the transport system. The polypeptide is Nickel import ATP-binding protein NikD (Pseudomonas putida (strain ATCC 47054 / DSM 6125 / CFBP 8728 / NCIMB 11950 / KT2440)).